The chain runs to 182 residues: LIM domain-containing protein C (182 aa).

LIM zinc-binding domains are found at residues Ser3 to Gln63 and Thr110 to Pro170.

The protein localises to the cell projection. Its subcellular location is the pseudopodium. It is found in the cytoplasm. It localises to the cell cortex. The protein resides in the cytoskeleton. In terms of biological role, binds to F-actin and may modulate the chemotactic response during early development and contribute to the maintenance of the strength of the actin cytoskeleton. In Dictyostelium discoideum (Social amoeba), this protein is LIM domain-containing protein C (limC).